The chain runs to 58 residues: uncharacterized protein (58 aa).

It localises to the plastid. It is found in the chloroplast. This is an uncharacterized protein from Chlamydomonas reinhardtii (Chlamydomonas smithii).